A 366-amino-acid polypeptide reads, in one-letter code: Aminomethyltransferase (366 aa).

It belongs to the GcvT family. The glycine cleavage system is composed of four proteins: P, T, L and H.

It catalyses the reaction N(6)-[(R)-S(8)-aminomethyldihydrolipoyl]-L-lysyl-[protein] + (6S)-5,6,7,8-tetrahydrofolate = N(6)-[(R)-dihydrolipoyl]-L-lysyl-[protein] + (6R)-5,10-methylene-5,6,7,8-tetrahydrofolate + NH4(+). Its function is as follows. The glycine cleavage system catalyzes the degradation of glycine. The protein is Aminomethyltransferase of Bacillus cereus (strain ZK / E33L).